The primary structure comprises 468 residues: BTB/POZ domain-containing protein 17 (468 aa).

The signal sequence occupies residues 1 to 16 (MRRFCVVPLLLVLVEA). The 70-residue stretch at 51-120 (TDTILRIRTA…FYCGEISVNL (70 aa)) folds into the BTB domain. Positions 159 to 259 (VVSWYHYALR…ISPSQLFQIQ (101 aa)) constitute a BACK domain.

The protein resides in the secreted. The protein is BTB/POZ domain-containing protein 17 (btbd17) of Xenopus tropicalis (Western clawed frog).